Reading from the N-terminus, the 496-residue chain is MEFSIKSGTPEKQRKDCVVVGVFEARKFSDAAAVLDRASQGYLGDILRTGDIDGKPGSTLLLHSVPGVAAGRVLLVGLGKERELDEHSYRKALRAAIKALHTLDDADVAICLAEVPVKKRDTAWRVAQVVEIAEDSTYRFDRFKSKPANGKKGIAKLQVHVTRRSDVAEGEKGLRQGKALAAGVSFAKDLGNLAPNYCTPSYLAEQAEALSDSHGLQVEVLEKEDIEKLGMGSFLGVTKGSVQPPKLIVLQHRKGKKSQKPVVLVGKGITFDTGGISLKPGADMDEMKYDMCGAASVLGTFKAIAELDLPLNVVGIIPTCENMPDGNATRPGDVLTSMSGQTIEVLNTDAEGRLILCDALTYAERFEPQAVVDVATLTGACVIALGHHASGLFSNKDSLAEELLDAGNEAYDRAWRLPLWDDYQSQLDSNFADMANIGGRAGGSITAACFLSRFAKKYDWAHLDIAGTAWKSGKEKGATGRPVPLLTEFLKQRAGK.

Mn(2+)-binding residues include lysine 267 and aspartate 272. Lysine 279 is an active-site residue. The Mn(2+) site is built by aspartate 290, aspartate 349, and glutamate 351. Residue arginine 353 is part of the active site.

Belongs to the peptidase M17 family. It depends on Mn(2+) as a cofactor.

The protein localises to the cytoplasm. It catalyses the reaction Release of an N-terminal amino acid, Xaa-|-Yaa-, in which Xaa is preferably Leu, but may be other amino acids including Pro although not Arg or Lys, and Yaa may be Pro. Amino acid amides and methyl esters are also readily hydrolyzed, but rates on arylamides are exceedingly low.. The catalysed reaction is Release of an N-terminal amino acid, preferentially leucine, but not glutamic or aspartic acids.. In terms of biological role, presumably involved in the processing and regular turnover of intracellular proteins. Catalyzes the removal of unsubstituted N-terminal amino acids from various peptides. The sequence is that of Probable cytosol aminopeptidase from Methylobacillus flagellatus (strain ATCC 51484 / DSM 6875 / VKM B-1610 / KT).